Here is a 212-residue protein sequence, read N- to C-terminus: ATP-dependent dethiobiotin synthetase BioD (212 aa).

13–18 (GIGKTV) contacts ATP. T17 is a binding site for Mg(2+). K33 is an active-site residue. S37 is a binding site for substrate. E100 is a binding site for Mg(2+). ATP is bound by residues 100-103 (EGAG), 160-161 (IS), and 184-186 (PLL).

The protein belongs to the dethiobiotin synthetase family. As to quaternary structure, homodimer. The cofactor is Mg(2+).

Its subcellular location is the cytoplasm. The catalysed reaction is (7R,8S)-7,8-diammoniononanoate + CO2 + ATP = (4R,5S)-dethiobiotin + ADP + phosphate + 3 H(+). It functions in the pathway cofactor biosynthesis; biotin biosynthesis; biotin from 7,8-diaminononanoate: step 1/2. Its function is as follows. Catalyzes a mechanistically unusual reaction, the ATP-dependent insertion of CO2 between the N7 and N8 nitrogen atoms of 7,8-diaminopelargonic acid (DAPA, also called 7,8-diammoniononanoate) to form a ureido ring. This Brucella abortus (strain S19) protein is ATP-dependent dethiobiotin synthetase BioD.